The chain runs to 361 residues: dTDP-glucose 4,6-dehydratase (361 aa).

Residues 11–12 (FI), 32–35 (DKLT), 58–59 (DI), 80–84 (LAAES), and threonine 99 contribute to the NAD(+) site. Serine 84 is a binding site for substrate. Threonine 133 is a substrate binding site. Aspartate 134 serves as the catalytic Proton donor. Residues glutamate 135 and tyrosine 167 each act as proton acceptor in the active site. 167–171 (YSASK) provides a ligand contact to NAD(+). Substrate is bound at residue asparagine 196. Asparagine 197 is a binding site for NAD(+). Substrate is bound by residues 206 to 207 (KL), 222 to 224 (PIY), arginine 231, asparagine 266, 296 to 300 (DRPGH), and tyrosine 357.

Belongs to the NAD(P)-dependent epimerase/dehydratase family. dTDP-glucose dehydratase subfamily. In terms of assembly, homodimer. It depends on NAD(+) as a cofactor.

It catalyses the reaction dTDP-alpha-D-glucose = dTDP-4-dehydro-6-deoxy-alpha-D-glucose + H2O. The protein operates within carbohydrate biosynthesis; dTDP-L-rhamnose biosynthesis. It functions in the pathway bacterial outer membrane biogenesis; LPS O-antigen biosynthesis. Its function is as follows. Catalyzes the dehydration of dTDP-D-glucose to form dTDP-6-deoxy-D-xylo-4-hexulose via a three-step process involving oxidation, dehydration and reduction. The protein is dTDP-glucose 4,6-dehydratase of Salmonella typhimurium (strain LT2 / SGSC1412 / ATCC 700720).